Reading from the N-terminus, the 235-residue chain is Motile sperm domain-containing protein 3 (235 aa).

2 disordered regions span residues 1–25 and 143–171; these read MRRGAPQDQELVGPGPPGRGSRGAP and ELQGQPDPAPRPGPPAGTPPPTARHFQEH. Residues 33–145 form the MSP domain; sequence PVLVFPPDLV…RAPAYPLELQ (113 aa). Residues 149 to 164 show a composition bias toward pro residues; it reads DPAPRPGPPAGTPPPT. A run of 2 helical transmembrane segments spans residues 180 to 200 and 213 to 233; these read SFLLFLLTGIVSVAFLLLPLP and VSLGQKLVAAYVLGLLTMVFL.

It is found in the membrane. In Homo sapiens (Human), this protein is Motile sperm domain-containing protein 3 (MOSPD3).